A 494-amino-acid polypeptide reads, in one-letter code: 3-octaprenyl-4-hydroxybenzoate carboxy-lyase (494 aa).

Asn-172 contributes to the Mn(2+) binding site. Residues 175-177, 189-191, and 194-195 contribute to the prenylated FMN site; these read IYR, RWL, and RG. Glu-238 is a Mn(2+) binding site. Residue Asp-287 is the Proton donor of the active site.

It belongs to the UbiD family. As to quaternary structure, homohexamer. The cofactor is prenylated FMN. Mn(2+) is required as a cofactor.

The protein localises to the cell membrane. It catalyses the reaction a 4-hydroxy-3-(all-trans-polyprenyl)benzoate + H(+) = a 2-(all-trans-polyprenyl)phenol + CO2. The protein operates within cofactor biosynthesis; ubiquinone biosynthesis. Its function is as follows. Catalyzes the decarboxylation of 3-octaprenyl-4-hydroxy benzoate to 2-octaprenylphenol, an intermediate step in ubiquinone biosynthesis. This chain is 3-octaprenyl-4-hydroxybenzoate carboxy-lyase, found in Erwinia tasmaniensis (strain DSM 17950 / CFBP 7177 / CIP 109463 / NCPPB 4357 / Et1/99).